Reading from the N-terminus, the 153-residue chain is Putative pre-16S rRNA nuclease (153 aa).

Belongs to the YqgF nuclease family.

It is found in the cytoplasm. Its function is as follows. Could be a nuclease involved in processing of the 5'-end of pre-16S rRNA. In Chloroflexus aurantiacus (strain ATCC 29366 / DSM 635 / J-10-fl), this protein is Putative pre-16S rRNA nuclease.